The chain runs to 160 residues: Cytochrome b6-f complex subunit 4 (160 aa).

3 helical membrane-spanning segments follow: residues 36–56 (LLYI…GLSV), 95–115 (LLGV…PFIE), and 127–147 (PVAM…GIGA).

Belongs to the cytochrome b family. PetD subfamily. In terms of assembly, the 4 large subunits of the cytochrome b6-f complex are cytochrome b6, subunit IV (17 kDa polypeptide, petD), cytochrome f and the Rieske protein, while the 4 small subunits are petG, petL, petM and petN. The complex functions as a dimer.

The protein localises to the plastid. Its subcellular location is the chloroplast thylakoid membrane. Its function is as follows. Component of the cytochrome b6-f complex, which mediates electron transfer between photosystem II (PSII) and photosystem I (PSI), cyclic electron flow around PSI, and state transitions. This chain is Cytochrome b6-f complex subunit 4, found in Guillardia theta (Cryptophyte).